A 358-amino-acid chain; its full sequence is Branched-chain amino acid aminotransferase gloG (358 aa).

Pyridoxal 5'-phosphate is bound at residue arginine 91. The Proton acceptor role is filled by lysine 195. Lysine 195 is subject to N6-(pyridoxal phosphate)lysine. Glutamate 231 is a pyridoxal 5'-phosphate binding site.

Belongs to the class-IV pyridoxal-phosphate-dependent aminotransferase family. The cofactor is pyridoxal 5'-phosphate.

The catalysed reaction is L-isoleucine + 2-oxoglutarate = (S)-3-methyl-2-oxopentanoate + L-glutamate. It catalyses the reaction L-leucine + 2-oxoglutarate = 4-methyl-2-oxopentanoate + L-glutamate. It carries out the reaction L-valine + 2-oxoglutarate = 3-methyl-2-oxobutanoate + L-glutamate. The protein operates within mycotoxin biosynthesis. Branched-chain amino acid aminotransferase; part of the gene cluster that mediates the biosynthesis of pneumocandins, lipohexapeptides of the echinocandin family that prevent fungal cell wall formation by non-competitive inhibition of beta-1,3-glucan synthase. The 10,12-dimethylmyristoyl side chain is synthesized by the reducing polyketide synthase gloL/GLPKS4. The thioesterase gloN/GLHYD exclusively interacts with gloL/GLPKS4 to maintain turnover of the polyketide side chain. The 10R,12S-dimethylmyristic acid is then transferred to the first thiolation domain of the nonribosomal peptide synthetase gloA/GLNRPS4 by the acyl-AMP ligase gloD/GLligase, followed by its acylation to L-ornithine to trigger elongation of the cyclic hexapeptide. L-ornithine, 4R-hydroxyl-L-proline (generated from L-proline by the dioxygenase gloF/GLOXY2), 3S-hydroxyl-L-homotyrosine (generated by gloG/GLHtyB, gloH/GLHtyA, gloI/GLHtyC, gloJ/GLHtyD and hydroxylated at C-3 by the dioxygenase gloM/GLOXY1), 3R-hydroxyl-L-glutamine (generated from L-glutamine probably by the dioxygenase gloE/GLOXY3) and 3S-hydroxyl-L-proline (generated from L-proline by the dioxygenase gloF/GLOXY2 to yield pneumocandin B0), or 3S-hydroxyl-4S-methyl-L-proline (generated from L-leucine by the dioxygenase gloC/GLOXY4 to yield pneumocandin A0) are sequentially added to the growing chain. The last C domain of gloA/GLNRPS4 is proposed to be responsible for cyclization by condensation to form the peptide bond between L-ornithine and 3S-hydroxyl-4S-methyl-L-proline (for pneumocandin A0) or 3S-hydroxyl-L-proline (for pneumocandin B0). Finally, the subsequent C-4 hydroxylation of 3S-hydroxyl-L-homotyrosine and L-ornithine dihydroxylation at C-4 and C-5 are performed by the cytochrome P450 monooxygenases gloP/GLP450-1 and gloO/GLP450-2, respectively. The polypeptide is Branched-chain amino acid aminotransferase gloG (Glarea lozoyensis (strain ATCC 20868 / MF5171)).